We begin with the raw amino-acid sequence, 219 residues long: Translation initiation factor 6 (219 aa).

This sequence belongs to the eIF-6 family.

Functionally, binds to the 50S ribosomal subunit and prevents its association with the 30S ribosomal subunit to form the 70S initiation complex. This Methanosarcina mazei (strain ATCC BAA-159 / DSM 3647 / Goe1 / Go1 / JCM 11833 / OCM 88) (Methanosarcina frisia) protein is Translation initiation factor 6.